We begin with the raw amino-acid sequence, 445 residues long: Flagellum-associated coiled-coil domain-containing protein 1 (445 aa).

Residues 26 to 47 form a disordered region; sequence PQLPRKNSTGSSKLTPLVPAPK. Residues 30 to 39 are compositionally biased toward polar residues; it reads RKNSTGSSKL. Coiled-coil stretches lie at residues 122–226 and 283–315; these read SRTN…TYQD and AVFE…TKEV. Lys-376 carries the N6-acetyllysine modification. Residues 387-414 are a coiled coil; the sequence is EKYKHTIQILTEENIHLKQKIISKNEEI.

The protein localises to the cytoplasm. The protein resides in the cytoplasmic granule. It localises to the cell projection. Its subcellular location is the cilium. It is found in the flagellum. In Homo sapiens (Human), this protein is Flagellum-associated coiled-coil domain-containing protein 1.